The sequence spans 466 residues: uncharacterized protein (466 aa).

The disordered stretch occupies residues 1–22 (MKKNNERVNTNPSLISKSYNMK). Positions 7–19 (RVNTNPSLISKSY) are enriched in polar residues. Phosphoserine occurs at positions 40 and 42. Residues 108–183 (YFVHMDNISP…RLISATITNH (76 aa)) enclose the RRM domain. Residues 186 to 207 (RLPNAEHLESSTKTKDESQDKD) are disordered. Residues 188–207 (PNAEHLESSTKTKDESQDKD) show a composition bias toward basic and acidic residues. The CID domain occupies 209–368 (LTKLDRAKLE…RAWRNFSGNT (160 aa)). Position 371 is a phosphoserine (Ser371). Positions 425–436 (STETSSSSSPQP) are enriched in low complexity. The interval 425–448 (STETSSSSSPQPTEERKAKFKPSF) is disordered.

The protein localises to the nucleus. The protein resides in the cytoplasm. This is an uncharacterized protein from Schizosaccharomyces pombe (strain 972 / ATCC 24843) (Fission yeast).